A 183-amino-acid chain; its full sequence is Ribosome maturation factor RimM (183 aa).

Positions 104–183 (EGDYYWKDLI…TIEVDWDPGF (80 aa)) constitute a PRC barrel domain.

This sequence belongs to the RimM family. In terms of assembly, binds ribosomal protein uS19.

It is found in the cytoplasm. Its function is as follows. An accessory protein needed during the final step in the assembly of 30S ribosomal subunit, possibly for assembly of the head region. Essential for efficient processing of 16S rRNA. May be needed both before and after RbfA during the maturation of 16S rRNA. It has affinity for free ribosomal 30S subunits but not for 70S ribosomes. The protein is Ribosome maturation factor RimM of Cronobacter sakazakii (strain ATCC BAA-894) (Enterobacter sakazakii).